The following is a 299-amino-acid chain: Leucine zipper transcription factor-like protein 1 (299 aa).

The stretch at 96 to 296 (LKLQTDISEL…DLRKRLAKYE (201 aa)) forms a coiled coil. Residues 145–299 (GAAELLNKEI…KRLAKYEPED (155 aa)) are interaction with BSS9.

It belongs to the LZTFL1 family. As to quaternary structure, self-associates. Interacts with BBS9; the interaction mediates the association of LZTL1 with the BBsome complex and regulates BBSome ciliary trafficking.

The protein resides in the cytoplasm. In terms of biological role, regulates ciliary localization of the BBSome complex. Together with the BBSome complex, controls SMO ciliary trafficking and contributes to the sonic hedgehog (SHH) pathway regulation. May play a role in neurite outgrowth. May have tumor suppressor function. The sequence is that of Leucine zipper transcription factor-like protein 1 (LZTFL1) from Bos taurus (Bovine).